The primary structure comprises 330 residues: Endo-1,4-beta-xylanase (330 aa).

In terms of domain architecture, GH10 spans 2-330; the sequence is CSSIPSLREV…KPAFWRVVNI (329 aa). Glu-133 acts as the Proton donor in catalysis. Catalysis depends on Glu-240, which acts as the Nucleophile.

It belongs to the glycosyl hydrolase 10 (cellulase F) family. Cytoplasmic xylanase subfamily.

Its subcellular location is the cytoplasm. The enzyme catalyses Endohydrolysis of (1-&gt;4)-beta-D-xylosidic linkages in xylans.. The protein operates within glycan degradation; xylan degradation. The polypeptide is Endo-1,4-beta-xylanase (xynA) (Geobacillus stearothermophilus (Bacillus stearothermophilus)).